Consider the following 1203-residue polypeptide: DNA-directed RNA polymerase subunit beta (1203 aa).

A compositionally biased stretch (basic and acidic residues) spans 1174–1195 (AAQEAKAAFEAEEAEKATKAEA). The interval 1174 to 1203 (AAQEAKAAFEAEEAEKATKAEATEEAAEQE) is disordered.

The protein belongs to the RNA polymerase beta chain family. In terms of assembly, the RNAP catalytic core consists of 2 alpha, 1 beta, 1 beta' and 1 omega subunit. When a sigma factor is associated with the core the holoenzyme is formed, which can initiate transcription.

The enzyme catalyses RNA(n) + a ribonucleoside 5'-triphosphate = RNA(n+1) + diphosphate. Functionally, DNA-dependent RNA polymerase catalyzes the transcription of DNA into RNA using the four ribonucleoside triphosphates as substrates. In Streptococcus pneumoniae (strain JJA), this protein is DNA-directed RNA polymerase subunit beta.